The following is a 94-amino-acid chain: Small ribosomal subunit protein bS20 (94 aa).

A compositionally biased stretch (basic and acidic residues) spans Met-1 to Arg-10. The interval Met-1–Arg-20 is disordered. The span at Asn-11–Arg-20 shows a compositional bias: basic residues.

Belongs to the bacterial ribosomal protein bS20 family.

Its function is as follows. Binds directly to 16S ribosomal RNA. In Sorangium cellulosum (strain So ce56) (Polyangium cellulosum (strain So ce56)), this protein is Small ribosomal subunit protein bS20.